A 501-amino-acid chain; its full sequence is MPTTVISGFTHNFLGKAPVWYKQVILLFLVINPIVMYLLGPGVAGWLLIGEFIFTLAMALKCYPLLPGGLLAVEALLIGLTSADAVYHEVLTNFPVILLLMFMVAGIYFMKELLLVTFTQILVGVRSKSALSLLFCSAAAVLSAFLDALTVTAVIISVAVGFFSVYHKVASGKGYQQKDHNTNSDDEVIELHREDLENFRAFLRSLLMHGAIGTALGGVATMVGEPQNLLIAKVVGWDFAGFFLHMAPVSIPVLFAGLATCWALEKLRWFGYGGRLPKPVRRVLEEFADNEKARRTKSDQAALWIQAVAAVILVFGLAFHIAEVGLIGLLVIILITSFTGVTDEHQIGKAFQESLPFTSLLVVFFAVVAVIHEQHLFKPIIDYVLALPEGQQPGMFFIANGLLSMISDNVFVATVYISEVKQALDAGSISYEHFQTLAVAINTGTNLPSVATPNGQAAFLFLLTSAIAPLVRLSYGRMVIMALPYTIVMGGVGLYMVTHAF.

The next 11 membrane-spanning stretches (helical) occupy residues Val24 to Ala44, Trp46 to Leu66, Val90 to Met110, Phe145 to Val165, Leu206 to Pro226, Phe239 to Ala259, Ala302 to Phe319, Phe351 to Ile371, Met395 to Val415, Val450 to Leu470, and Met478 to Thr498.

It belongs to the NhaB Na(+)/H(+) (TC 2.A.34) antiporter family.

The protein localises to the cell inner membrane. It carries out the reaction 2 Na(+)(in) + 3 H(+)(out) = 2 Na(+)(out) + 3 H(+)(in). Its function is as follows. Na(+)/H(+) antiporter that extrudes sodium in exchange for external protons. The chain is Na(+)/H(+) antiporter NhaB from Marinobacter nauticus (strain ATCC 700491 / DSM 11845 / VT8) (Marinobacter aquaeolei).